A 108-amino-acid polypeptide reads, in one-letter code: Peptidyl-prolyl cis-trans isomerase FKBP1A (108 aa).

A PPIase FKBP-type domain is found at 20–108 (GQTCVVHYTG…IFDVELLKLE (89 aa)). An N6-acetyllysine; alternate modification is found at lysine 53. Lysine 53 is subject to N6-succinyllysine; alternate.

The protein belongs to the FKBP-type PPIase family. FKBP1 subfamily. As to quaternary structure, interacts with TGFBR1; prevents TGFBR1 phosphorylation by TGFBR2 and stabilizes it in the inactive conformation. Interacts with ACVR1B and SMAD7. Identified in a complex composed of RYR1, PDE4D, PKA, FKBP1A and protein phosphatase 1 (PP1). Interacts directly with RYR2 and RYR3. Interacts with GLMN; rapamycin and FK506 abolish the interaction with GLMN in a dose dependent manner. Interacts directly with RYR1.

The protein resides in the cytoplasm. It localises to the cytosol. The protein localises to the sarcoplasmic reticulum membrane. It catalyses the reaction [protein]-peptidylproline (omega=180) = [protein]-peptidylproline (omega=0). Inhibited by both FK506 and rapamycin. Its function is as follows. Keeps in an inactive conformation TGFBR1, the TGF-beta type I serine/threonine kinase receptor, preventing TGF-beta receptor activation in absence of ligand. May modulate the RYR1 calcium channel activity. PPIases accelerate the folding of proteins. It catalyzes the cis-trans isomerization of proline imidic peptide bonds in oligopeptides. This Bos taurus (Bovine) protein is Peptidyl-prolyl cis-trans isomerase FKBP1A (FKBP1A).